We begin with the raw amino-acid sequence, 95 residues long: Nickel and cobalt resistance protein CnrY (95 aa).

Over 1 to 45 (MADVEEWLTHARKVTQEASIGVDVTSIQECISAEPAQRVLVARRD) the chain is Cytoplasmic. The helical transmembrane segment at 46 to 68 (AWRAICCAAFAALVAFAAINRVA) threads the bilayer. Topologically, residues 69-95 (TIMLEKPAPTWVATPSAASPFGLLIGK) are periplasmic.

The protein to A.xylosoxydans NccY.

Its subcellular location is the cell inner membrane. In terms of biological role, nickel and cobalt resistance proteins CnrA, CnrB, CnrC CnrH and CnrR may be involved in the regulation of CNR. CnrH alone is able to activate cnr expression, and both CnrY and CrnX are needed for nickel induction of CnrH. In the absence of wild-type CnrY (due either to a frameshift, PubMed:10671463 or absence of the transcript, PubMed:10671464), nickel and cobalt resistance is constitutive, indicating that CrnY may act as a repressor or an anti-sigma factor. The polypeptide is Nickel and cobalt resistance protein CnrY (cnrY) (Cupriavidus metallidurans (strain ATCC 43123 / DSM 2839 / NBRC 102507 / CH34) (Ralstonia metallidurans)).